Here is a 161-residue protein sequence, read N- to C-terminus: Nucleotide-binding protein Shewmr4_3156 (161 aa).

It belongs to the YajQ family.

Functionally, nucleotide-binding protein. This Shewanella sp. (strain MR-4) protein is Nucleotide-binding protein Shewmr4_3156.